The chain runs to 4462 residues: Dynein axonemal heavy chain 17 (4462 aa).

Positions 1–1808 (MTMAPDVRLE…FANICDAQIQ (1808 aa)) are stem. TPR repeat units lie at residues 1019–1052 (TWTDDTIPKTPPTLAQFQEQIDSYEKLYEEVSKC) and 1702–1736 (IWWTTEVGLAFARLEEGYENAIRDYNKKQISQLNV). AAA stretches follow at residues 1809-2030 (YSYE…VLVV), 2090-2311 (KIIK…FGFK), 2417-2665 (ELDP…IFQG), and 2763-3012 (SYNE…ERRY). ATP-binding positions include 1847-1854 (GPAGTGKT), 2128-2135 (GNAGSGKS), 2455-2462 (GNAGTGKS), and 2801-2808 (GVGGSGKQ). Coiled coils occupy residues 3027–3086 (YQNL…LIQV) and 3257–3309 (DVAP…EKIK). The segment at 3027–3313 (YQNLLAKKRT…TAEKIKCQQE (287 aa)) is stalk. AAA regions lie at residues 3405-3632 (LTDD…EIEE) and 3842-4068 (IKNF…VLYN). One copy of the TPR 3 repeat lies at 4147–4182 (PESPYLYGLHPNAEIGFLTVTSEKLFRTVLEMQPKE).

Belongs to the dynein heavy chain family. As to quaternary structure, consists of at least two heavy chains and a number of intermediate and light chains. Expressed in testis. Expressed in spermatozoa (at protein level). Not detected in airway epithelial cells (at protein level).

It localises to the cytoplasm. It is found in the cytoskeleton. The protein localises to the flagellum axoneme. In terms of biological role, force generating protein component of the outer dynein arms (ODAs) in the sperm flagellum. Produces force towards the minus ends of microtubules. Dynein has ATPase activity; the force-producing power stroke is thought to occur on release of ADP. Plays a major role in sperm motility, implicated in sperm flagellar assembly and beating. This Homo sapiens (Human) protein is Dynein axonemal heavy chain 17.